We begin with the raw amino-acid sequence, 362 residues long: 4-hydroxytryptamine kinase (362 aa).

Residues Asn-37, Lys-57, and 118–120 (QDV) each bind ATP. The active site involves Asp-224. 249-251 (DWE) serves as a coordination point for ATP.

This sequence belongs to the methylthioribose kinase family. Monomer. It depends on Mg(2+) as a cofactor.

The catalysed reaction is 4-hydroxytryptamine + ATP = norbaeocystin + ADP + H(+). It catalyses the reaction psilocin + ATP = psilocybin + ADP + H(+). The enzyme catalyses 4-hydroxy-N,N,N-trimethyltryptamine + ATP = aeruginascin + ADP + H(+). Its pathway is secondary metabolite biosynthesis. Functionally, 4-hydroxytryptamine kinase; part of the gene cluster that mediates the biosynthesis of psilocybin, a psychotropic tryptamine-derived natural product. The first step in the pathway is the decarboxylation of L-tryptophan to tryptamine by the decarboxylase psiD. 4-hydroxy-L-tryptophan is accepted as substrate by psiD as well. The cytochrome P450 monooxygenase psiH then converts tryptamine to 4-hydroxytryptamine. The kinase psiK catalyzes the 4-O-phosphorylation step by converting 4-hydroxytryptamine into norbaeocystin. The methyltransferase psiM then catalyzes iterative methyl transfer to the amino group of norbaeocystin to yield psilocybin via a monomethylated intermediate, baeocystin. 4-hydroxy-6-methyl-l-tryptophancan also be converted the decarboxylase PsiD, kinase PsiK, and methyltransferase PsiM into respectively 6-methyl-norbaeocystin, 6-methylbaeocystin, and 6-methylpsilocybin. PsiK kinase can also turn psilocin into psilocybin. This activity may represent a protective mechanism to rephosphorylate the unstable psilocin to the stable psilocybin in case of intracellular ester cleavage. Moreover, psiK is able to O-phosphorylate the quaternary amine 4-hydroxy-N,N,N-trimethyltryptamine (4-OH-TMT) to yield aeruginascin, another bioactive compound found in Psilocybe species. The sequence is that of 4-hydroxytryptamine kinase from Psilocybe cubensis (Psychedelic mushroom).